We begin with the raw amino-acid sequence, 185 residues long: Ribosome-recycling factor (185 aa).

This sequence belongs to the RRF family.

It is found in the cytoplasm. Functionally, responsible for the release of ribosomes from messenger RNA at the termination of protein biosynthesis. May increase the efficiency of translation by recycling ribosomes from one round of translation to another. The chain is Ribosome-recycling factor from Rhodococcus erythropolis (strain PR4 / NBRC 100887).